Reading from the N-terminus, the 607-residue chain is Pyruvate decarboxylase 2 (607 aa).

Positions Met1 to Pro22 are disordered. Positions 69 and 156 each coordinate substrate. Residues Asp434–Ile516 are thiamine pyrophosphate binding. Residues Asp484, Asn511, and Gly513 each contribute to the Mg(2+) site. Glu517 contributes to the substrate binding site.

It belongs to the TPP enzyme family. In terms of assembly, homotetramer. A metal cation is required as a cofactor. Requires thiamine diphosphate as cofactor. Expressed at low levels in roots, shoots, flowers, siliques and seeds.

The catalysed reaction is a 2-oxocarboxylate + H(+) = an aldehyde + CO2. The chain is Pyruvate decarboxylase 2 (PDC2) from Arabidopsis thaliana (Mouse-ear cress).